The chain runs to 883 residues: Alanine--tRNA ligase (883 aa).

Zn(2+)-binding residues include His563, His567, Cys677, and His681.

This sequence belongs to the class-II aminoacyl-tRNA synthetase family. The cofactor is Zn(2+).

It localises to the cytoplasm. It catalyses the reaction tRNA(Ala) + L-alanine + ATP = L-alanyl-tRNA(Ala) + AMP + diphosphate. Catalyzes the attachment of alanine to tRNA(Ala) in a two-step reaction: alanine is first activated by ATP to form Ala-AMP and then transferred to the acceptor end of tRNA(Ala). Also edits incorrectly charged Ser-tRNA(Ala) and Gly-tRNA(Ala) via its editing domain. The sequence is that of Alanine--tRNA ligase from Cereibacter sphaeroides (strain ATCC 17025 / ATH 2.4.3) (Rhodobacter sphaeroides).